The following is a 583-amino-acid chain: uncharacterized protein (583 aa).

This is an uncharacterized protein from Acanthamoeba polyphaga (Amoeba).